A 219-amino-acid polypeptide reads, in one-letter code: Ribose-5-phosphate isomerase A (219 aa).

Substrate-binding positions include 28–31 (TGST), 81–84 (DGAD), and 94–97 (KGGG). Residue Glu-103 is the Proton acceptor of the active site. Residue Lys-121 participates in substrate binding.

It belongs to the ribose 5-phosphate isomerase family. Homodimer.

It catalyses the reaction aldehydo-D-ribose 5-phosphate = D-ribulose 5-phosphate. Its pathway is carbohydrate degradation; pentose phosphate pathway; D-ribose 5-phosphate from D-ribulose 5-phosphate (non-oxidative stage): step 1/1. Functionally, catalyzes the reversible conversion of ribose-5-phosphate to ribulose 5-phosphate. The sequence is that of Ribose-5-phosphate isomerase A from Shewanella frigidimarina (strain NCIMB 400).